The sequence spans 264 residues: ATP synthase subunit a (264 aa).

Transmembrane regions (helical) follow at residues 29-49, 90-110, 134-154, 177-197, 208-228, and 235-255; these read TWHI…LWIF, IAPL…MDMI, DVNI…FYSI, IPVN…SLAL, LIFI…TLGV, and LIFH…LTIV.

The protein belongs to the ATPase A chain family. F-type ATPases have 2 components, CF(1) - the catalytic core - and CF(0) - the membrane proton channel. CF(1) has five subunits: alpha(3), beta(3), gamma(1), delta(1), epsilon(1). CF(0) has three main subunits: a(1), b(2) and c(9-12). The alpha and beta chains form an alternating ring which encloses part of the gamma chain. CF(1) is attached to CF(0) by a central stalk formed by the gamma and epsilon chains, while a peripheral stalk is formed by the delta and b chains.

It localises to the cell inner membrane. Key component of the proton channel; it plays a direct role in the translocation of protons across the membrane. In Shewanella baltica (strain OS223), this protein is ATP synthase subunit a.